The chain runs to 174 residues: Large ribosomal subunit protein uL15 (174 aa).

Disordered regions lie at residues 1 to 56 (MKLH…GQMR) and 150 to 174 (VERRSRSRGPNPPRHHRKAEATPGA). A compositionally biased stretch (gly residues) spans 21-35 (RGIGSGKGKTGGKGM).

It belongs to the universal ribosomal protein uL15 family. As to quaternary structure, part of the 50S ribosomal subunit.

In terms of biological role, binds to the 23S rRNA. The chain is Large ribosomal subunit protein uL15 from Roseiflexus castenholzii (strain DSM 13941 / HLO8).